Here is a 445-residue protein sequence, read N- to C-terminus: Putative transcription factor bHLH056 (445 aa).

Disordered regions lie at residues 36–70 (NQTHRQSYDPPPILRGSGSGRGEENAPLSQPPPHL), 224–260 (QIQPATESKLKAREETHGTEEARGSTSRKRSRTAEMH), and 365–445 (PFPN…QPTA). The span at 231–246 (SKLKAREETHGTEEAR) shows a compositional bias: basic and acidic residues. A bHLH domain is found at 255 to 304 (RTAEMHNLAERRRREKINEKMKTLQQLIPRCNKSTKVSTLDDAIEYVKSL). Over residues 418 to 433 (QGQTTSQLSSGQASSS) the composition is skewed to low complexity.

As to quaternary structure, homodimer.

It localises to the nucleus. The sequence is that of Putative transcription factor bHLH056 (BHLH56) from Arabidopsis thaliana (Mouse-ear cress).